The following is a 286-amino-acid chain: ATP synthase gamma chain (286 aa).

Belongs to the ATPase gamma chain family. F-type ATPases have 2 components, CF(1) - the catalytic core - and CF(0) - the membrane proton channel. CF(1) has five subunits: alpha(3), beta(3), gamma(1), delta(1), epsilon(1). CF(0) has three main subunits: a, b and c.

It is found in the cell inner membrane. Its function is as follows. Produces ATP from ADP in the presence of a proton gradient across the membrane. The gamma chain is believed to be important in regulating ATPase activity and the flow of protons through the CF(0) complex. This Pseudomonas fluorescens (strain ATCC BAA-477 / NRRL B-23932 / Pf-5) protein is ATP synthase gamma chain.